The following is a 478-amino-acid chain: Probable cytosol aminopeptidase (478 aa).

Residues K244 and D249 each contribute to the Mn(2+) site. The active site involves K256. Mn(2+)-binding residues include D267, D326, and E328. Residue R330 is part of the active site.

This sequence belongs to the peptidase M17 family. Mn(2+) serves as cofactor.

The protein localises to the cytoplasm. It catalyses the reaction Release of an N-terminal amino acid, Xaa-|-Yaa-, in which Xaa is preferably Leu, but may be other amino acids including Pro although not Arg or Lys, and Yaa may be Pro. Amino acid amides and methyl esters are also readily hydrolyzed, but rates on arylamides are exceedingly low.. It carries out the reaction Release of an N-terminal amino acid, preferentially leucine, but not glutamic or aspartic acids.. Presumably involved in the processing and regular turnover of intracellular proteins. Catalyzes the removal of unsubstituted N-terminal amino acids from various peptides. The protein is Probable cytosol aminopeptidase of Fusobacterium nucleatum subsp. nucleatum (strain ATCC 25586 / DSM 15643 / BCRC 10681 / CIP 101130 / JCM 8532 / KCTC 2640 / LMG 13131 / VPI 4355).